The primary structure comprises 476 residues: Adenosylhomocysteinase (476 aa).

3 residues coordinate substrate: Thr67, Asp142, and Glu202. 203–205 contributes to the NAD(+) binding site; the sequence is TTT. Lys232 and Asp236 together coordinate substrate. NAD(+) contacts are provided by residues Asn237, 266–271, Glu289, Asn324, 345–347, and Asn390; these read GYGDVG and IGH.

It belongs to the adenosylhomocysteinase family. The cofactor is NAD(+).

The protein resides in the cytoplasm. The catalysed reaction is S-adenosyl-L-homocysteine + H2O = L-homocysteine + adenosine. The protein operates within amino-acid biosynthesis; L-homocysteine biosynthesis; L-homocysteine from S-adenosyl-L-homocysteine: step 1/1. May play a key role in the regulation of the intracellular concentration of adenosylhomocysteine. In Prochlorococcus marinus (strain SARG / CCMP1375 / SS120), this protein is Adenosylhomocysteinase.